Consider the following 101-residue polypeptide: Small ribosomal subunit protein uS14 (101 aa).

The protein belongs to the universal ribosomal protein uS14 family. As to quaternary structure, part of the 30S ribosomal subunit. Contacts proteins S3 and S10.

Functionally, binds 16S rRNA, required for the assembly of 30S particles and may also be responsible for determining the conformation of the 16S rRNA at the A site. This is Small ribosomal subunit protein uS14 from Alkalilimnicola ehrlichii (strain ATCC BAA-1101 / DSM 17681 / MLHE-1).